A 452-amino-acid chain; its full sequence is GTPase Der (452 aa).

2 EngA-type G domains span residues 4-169 (PVVA…PPAA) and 177-352 (IKVA…ESHR). GTP contacts are provided by residues 10-17 (GRPNVGKS), 57-61 (DTGGL), 120-123 (NKCE), 183-190 (GRPNVGKS), 230-234 (DTAGI), and 295-298 (NKWD). The region spanning 353-438 (RRVSTSVIND…PIRLIWRGKP (86 aa)) is the KH-like domain.

It belongs to the TRAFAC class TrmE-Era-EngA-EngB-Septin-like GTPase superfamily. EngA (Der) GTPase family. As to quaternary structure, associates with the 50S ribosomal subunit.

Functionally, GTPase that plays an essential role in the late steps of ribosome biogenesis. In Microcystis aeruginosa (strain NIES-843 / IAM M-2473), this protein is GTPase Der.